A 902-amino-acid chain; its full sequence is Leucine-rich repeat-containing G-protein coupled receptor 5 (902 aa).

The N-terminal stretch at 1 to 22 is a signal peptide; it reads MDTSKTSFFLFSVLCSLQLVGA. The Extracellular segment spans residues 23 to 558; the sequence is ARPGKQQRSC…HLFGSWLTRT (536 aa). 2 disulfide bridges follow: C32-C38 and C36-C49. The LRRNT domain maps to 32-61; it reads CPTPCECEQEGMLVRVDCSDRALTSLPRNL. 17 LRR repeats span residues 41–61, 62–85, 86–109, 111–133, 134–157, 159–181, 182–205, 207–229, 230–253, 254–276, 278–300, 302–324, 325–347, 348–372, 374–393, 394–417, and 418–441; these read EGML…PRNL, SIFT…VMHN, LHFL…AFAG, GSLK…ALHN, LRSL…SFNG, FSLR…ALES, LSAL…AFRN, SSLV…CFDG, LHSL…IKTL, KNLK…AFIG, PSLI…AFQH, PELR…LTGT, TSLE…VCTQ, LPNL…GCQR, QKID…TFQQ, LVGL…SFSS, and LPSL…GLHG. N60 and N74 each carry an N-linked (GlcNAc...) asparagine glycan. N-linked (GlcNAc...) asparagine glycosylation occurs at N205. C345 and C370 form a disulfide bridge. A disulfide bridge links C476 with C537. N496 carries N-linked (GlcNAc...) asparagine glycosylation. Residues 559–579 traverse the membrane as a helical segment; sequence GVWLIVLLSFVCNALVIATVF. At 580–589 the chain is on the cytoplasmic side; sequence RPLSYVPSIK. A helical membrane pass occupies residues 590-610; the sequence is LLIGLIAIMNTLMGLSSGVLA. Residues 598-619 form an LRR 18 repeat; it reads MNTLMGLSSGVLATVDALTFGN. Residues 611-634 lie on the Extracellular side of the membrane; the sequence is TVDALTFGNFAQYGAWWESGVGCQ. The cysteines at positions 633 and 708 are disulfide-linked. The helical transmembrane segment at 635–655 threads the bilayer; that stretch reads ITGFLSVFAAETSIFLLTVAA. At 656–678 the chain is on the cytoplasmic side; sequence LERGFSIKCTTKFETKSSFINVK. The chain crosses the membrane as a helical span at residues 679 to 699; it reads LSIVFCFLLSIVIAVSPLLSG. Over 700-718 the chain is Extracellular; it reads STYGTSPLCFPLLFGDPSS. The chain crosses the membrane as a helical span at residues 719–739; that stretch reads MGFMVALVLLNSLCFLVMTIA. At 740-763 the chain is on the cytoplasmic side; that stretch reads YTKLYCSLEKGELENIWDCSMVKH. A helical membrane pass occupies residues 764-784; it reads IALLLFTNCILYCPVAFLSFS. Residues 785–798 are Extracellular-facing; the sequence is SLLNLTFISPEVNK. 2 N-linked (GlcNAc...) asparagine glycosylation sites follow: N788 and N797. Residues 799 to 819 traverse the membrane as a helical segment; it reads SILLLIIPLPACLNPLLYILF. The Cytoplasmic segment spans residues 820–902; that stretch reads NPHFKEDIGS…LSAVAFVPCH (83 aa).

This sequence belongs to the G-protein coupled receptor 1 family.

Its subcellular location is the cell membrane. The protein resides in the golgi apparatus. It is found in the trans-Golgi network membrane. Functionally, receptor for R-spondins that potentiates the canonical Wnt signaling pathway and acts as a stem cell marker of the intestinal epithelium and the hair follicle. Upon binding to R-spondins (RSPO1, RSPO2, RSPO3 or RSPO4), associates with phosphorylated LRP6 and frizzled receptors that are activated by extracellular Wnt receptors, triggering the canonical Wnt signaling pathway to increase expression of target genes. In contrast to classical G-protein coupled receptors, does not activate heterotrimeric G-proteins to transduce the signal. Involved in the development and/or maintenance of the adult intestinal stem cells during postembryonic development. The polypeptide is Leucine-rich repeat-containing G-protein coupled receptor 5 (lgr5) (Xenopus tropicalis (Western clawed frog)).